Consider the following 154-residue polypeptide: Endoribonuclease YbeY (154 aa).

Positions 114, 118, and 124 each coordinate Zn(2+).

Belongs to the endoribonuclease YbeY family. Zn(2+) serves as cofactor.

Its subcellular location is the cytoplasm. Single strand-specific metallo-endoribonuclease involved in late-stage 70S ribosome quality control and in maturation of the 3' terminus of the 16S rRNA. The sequence is that of Endoribonuclease YbeY from Haemophilus influenzae (strain PittEE).